Consider the following 366-residue polypeptide: UDP-N-acetylglucosamine--N-acetylmuramyl-(pentapeptide) pyrophosphoryl-undecaprenol N-acetylglucosamine transferase (366 aa).

Residues 14–16, Asn125, Arg168, Ser196, and Gln297 contribute to the UDP-N-acetyl-alpha-D-glucosamine site; that span reads TGG.

It belongs to the glycosyltransferase 28 family. MurG subfamily.

The protein resides in the cell inner membrane. The catalysed reaction is di-trans,octa-cis-undecaprenyl diphospho-N-acetyl-alpha-D-muramoyl-L-alanyl-D-glutamyl-meso-2,6-diaminopimeloyl-D-alanyl-D-alanine + UDP-N-acetyl-alpha-D-glucosamine = di-trans,octa-cis-undecaprenyl diphospho-[N-acetyl-alpha-D-glucosaminyl-(1-&gt;4)]-N-acetyl-alpha-D-muramoyl-L-alanyl-D-glutamyl-meso-2,6-diaminopimeloyl-D-alanyl-D-alanine + UDP + H(+). It participates in cell wall biogenesis; peptidoglycan biosynthesis. Cell wall formation. Catalyzes the transfer of a GlcNAc subunit on undecaprenyl-pyrophosphoryl-MurNAc-pentapeptide (lipid intermediate I) to form undecaprenyl-pyrophosphoryl-MurNAc-(pentapeptide)GlcNAc (lipid intermediate II). In Rhodopseudomonas palustris (strain HaA2), this protein is UDP-N-acetylglucosamine--N-acetylmuramyl-(pentapeptide) pyrophosphoryl-undecaprenol N-acetylglucosamine transferase.